A 344-amino-acid polypeptide reads, in one-letter code: tRNA N6-adenosine threonylcarbamoyltransferase (344 aa).

His-114 and His-118 together coordinate Fe cation. Substrate-binding positions include 136–140 (LVSGG), Asp-170, Gly-183, Asp-187, and Asn-278. Asp-306 serves as a coordination point for Fe cation. Positions 325-344 (PSPLDVPSDPGLPVMQGQVR) are disordered.

This sequence belongs to the KAE1 / TsaD family. Fe(2+) serves as cofactor.

It localises to the cytoplasm. The catalysed reaction is L-threonylcarbamoyladenylate + adenosine(37) in tRNA = N(6)-L-threonylcarbamoyladenosine(37) in tRNA + AMP + H(+). In terms of biological role, required for the formation of a threonylcarbamoyl group on adenosine at position 37 (t(6)A37) in tRNAs that read codons beginning with adenine. Is involved in the transfer of the threonylcarbamoyl moiety of threonylcarbamoyl-AMP (TC-AMP) to the N6 group of A37, together with TsaE and TsaB. TsaD likely plays a direct catalytic role in this reaction. In Mycobacterium tuberculosis (strain ATCC 25177 / H37Ra), this protein is tRNA N6-adenosine threonylcarbamoyltransferase.